The following is a 452-amino-acid chain: MLGPFEVLETIDMIQKENLDIRTITMGISLRDCCHPDIDISCKKIYDKITRYAEKLVVTGENIEREFGIPIINKRISVTPIALIAESSESDEYVKFAEAMDKAAQTVGVDFIGGFSSLVHKGYTVGDKRLIQSIPEALSRTKLVCSSVNVASTKAGINMDAVAEMGRIIKKCAELTADSGALACAKLVVFANAVEDNPFMAGAFHGIGEPECVINVGVSGPGVVKCALEKVKGADFGTVSETIKKTAFKITRMGQLVAQEASRRLNVPFGIVDLSLAPTPAIGDSVAYILEEMGLEKCGTHGTTAALALLNDAVKKGGVMASSYVGGLSGAFIPVSEDAGMIEAAMSGALSLEKLEAMTCVCSVGLDMIVVPGDTSAETISAIIADEAAIGVVNTKTTAVRIIPAPGKKVGDKVEFGGLLGSGPVMKVNPFSSSEFIKRGGRIPAPMHSLKN.

This sequence belongs to the UPF0210 family. In terms of assembly, homodimer.

The sequence is that of UPF0210 protein Ccel_1722 from Ruminiclostridium cellulolyticum (strain ATCC 35319 / DSM 5812 / JCM 6584 / H10) (Clostridium cellulolyticum).